We begin with the raw amino-acid sequence, 538 residues long: Cytochrome P450 monooxygenase astC (538 aa).

The chain crosses the membrane as a helical span at residues 18-38; that stretch reads ALMLPALVGCALLIYRAFFAI. Cys481 serves as a coordination point for heme.

It belongs to the cytochrome P450 family. It depends on heme as a cofactor.

It localises to the membrane. Its pathway is secondary metabolite biosynthesis; terpenoid biosynthesis. Cytochrome P450 monooxygenase; part of the gene cluster that mediates the biosynthesis of the sesquiterpenoid aspterric acid (AA), an inhibitor of dihydroxy-acid dehydratase (DHAD) effective as an herbicide. AstC catalyzes the third and last step within the pathway and converts the alpha-epoxy carboxylate intermediate produced by the cytochrome P450 monooxygenase astC from (-)daucane into the tricyclic aspterric acid. This Aspergillus terreus (strain NIH 2624 / FGSC A1156) protein is Cytochrome P450 monooxygenase astC.